Reading from the N-terminus, the 382-residue chain is Lipoyl synthase, mitochondrial (382 aa).

Residues 1–30 constitute a mitochondrion transit peptide; it reads MHGRRHLAASLARALTYAPSRSISSTPSLL. Polar residues predominate over residues 25–34; that stretch reads STPSLLQTLD. A disordered region spans residues 25 to 46; that stretch reads STPSLLQTLDPSTPSPAAAPPT. Residues cysteine 112, cysteine 117, cysteine 123, cysteine 143, cysteine 147, cysteine 150, and serine 359 each contribute to the [4Fe-4S] cluster site. A Radical SAM core domain is found at 128–348; the sequence is ETGTATATIM…RSLGVDMGFR (221 aa).

This sequence belongs to the radical SAM superfamily. Lipoyl synthase family. Requires [4Fe-4S] cluster as cofactor.

The protein resides in the mitochondrion. It carries out the reaction [[Fe-S] cluster scaffold protein carrying a second [4Fe-4S](2+) cluster] + N(6)-octanoyl-L-lysyl-[protein] + 2 oxidized [2Fe-2S]-[ferredoxin] + 2 S-adenosyl-L-methionine + 4 H(+) = [[Fe-S] cluster scaffold protein] + N(6)-[(R)-dihydrolipoyl]-L-lysyl-[protein] + 4 Fe(3+) + 2 hydrogen sulfide + 2 5'-deoxyadenosine + 2 L-methionine + 2 reduced [2Fe-2S]-[ferredoxin]. Its pathway is protein modification; protein lipoylation via endogenous pathway; protein N(6)-(lipoyl)lysine from octanoyl-[acyl-carrier-protein]: step 2/2. In terms of biological role, catalyzes the radical-mediated insertion of two sulfur atoms into the C-6 and C-8 positions of the octanoyl moiety bound to the lipoyl domains of lipoate-dependent enzymes, thereby converting the octanoylated domains into lipoylated derivatives. The chain is Lipoyl synthase, mitochondrial from Oryza sativa subsp. japonica (Rice).